The chain runs to 290 residues: MLKTIQDKARHRTRPLWAWLKLLWQRIDEDNMTTLAGNLAYVSLLSLVPLVAVVFALFAAFPMFSDVSIQLRHFIFANFLPATGDVIQRYIEQFVANSNKMTAVGACGLIVTALLLMYSIDSALNTIWRSKRARPKIYSFAVYWMILTLGPLLAGASLAISSYLLSLRWASDLNTVIDNVLRIFPLLLSWISFWLLYSIVPTIRVPNRDAIVGAFVAALLFEAGKKGFALYITMFPSYQLIYGVLAVIPILFVWVYWTWCIVLLGAEITVTLGEYRKLKQAAEQEEDDEP.

The next 6 helical transmembrane spans lie at 44-64 (LLSL…FPMF), 104-124 (VGAC…DSAL), 140-160 (FAVY…SLAI), 183-203 (IFPL…VPTI), 210-230 (AIVG…GFAL), and 244-264 (VLAV…IVLL).

This sequence belongs to the UPF0761 family.

It is found in the cell inner membrane. This Escherichia coli O139:H28 (strain E24377A / ETEC) protein is UPF0761 membrane protein YihY.